Consider the following 166-residue polypeptide: Large ribosomal subunit protein bL9 (166 aa).

Belongs to the bacterial ribosomal protein bL9 family.

In terms of biological role, binds to the 23S rRNA. This chain is Large ribosomal subunit protein bL9, found in Borrelia garinii subsp. bavariensis (strain ATCC BAA-2496 / DSM 23469 / PBi) (Borreliella bavariensis).